We begin with the raw amino-acid sequence, 348 residues long: RNA 3'-terminal phosphate cyclase (348 aa).

ATP contacts are provided by residues Gln102 and 285-288 (HMGD). The active-site Tele-AMP-histidine intermediate is His311.

Belongs to the RNA 3'-terminal cyclase family. Type 1 subfamily.

It is found in the cytoplasm. The enzyme catalyses a 3'-end 3'-phospho-ribonucleotide-RNA + ATP = a 3'-end 2',3'-cyclophospho-ribonucleotide-RNA + AMP + diphosphate. Functionally, catalyzes the conversion of 3'-phosphate to a 2',3'-cyclic phosphodiester at the end of RNA. The mechanism of action of the enzyme occurs in 3 steps: (A) adenylation of the enzyme by ATP; (B) transfer of adenylate to an RNA-N3'P to produce RNA-N3'PP5'A; (C) and attack of the adjacent 2'-hydroxyl on the 3'-phosphorus in the diester linkage to produce the cyclic end product. The biological role of this enzyme is unknown but it is likely to function in some aspects of cellular RNA processing. The chain is RNA 3'-terminal phosphate cyclase from Korarchaeum cryptofilum (strain OPF8).